A 339-amino-acid chain; its full sequence is MSNYPKYRVAAVQASPVLLDLDATIDKTCRLVDEAAANGAKVIAFPEAFIPGYPWWIWLGNADYGMKYYIQLYKNSVEIPSLAVQKLSSAGTNKVYFCVSVTEKDGGSLYLTQLWFDPNGDLIGKHRKLKATNAEKTIWGDGDGSMMPVFETEFGNLGGLQCWEHFLPLNVAAMASMNEQVHVASWPIGMPQEGHLFGPEQCVTATKYYAISNQVFCLLSSQIWTEEQRDKICETEEQRNFMKVGHGFSKIIAPNGMEIGNKLAHDEEGITYADIDLEQIIPGKFLIDSAGHYSTPGFLSLSFDRTEKKPIKHIGESAQETVTYEEIQYGNKANVKVHS.

Positions 7–277 (YRVAAVQASP…EGITYADIDL (271 aa)) constitute a CN hydrolase domain. The Proton acceptor role is filled by Glu47. Lys128 (proton donor) is an active-site residue. Catalysis depends on Cys162, which acts as the Nucleophile.

Belongs to the carbon-nitrogen hydrolase superfamily. Nitrilase family.

It catalyses the reaction a nitrile + 2 H2O = a carboxylate + NH4(+). The polypeptide is Nitrilase (nit) (Bacillus sp. (strain OxB-1)).